The sequence spans 266 residues: Putative pyruvate, phosphate dikinase regulatory protein (266 aa).

149-156 (GVSRTSKT) contacts ADP.

It belongs to the pyruvate, phosphate/water dikinase regulatory protein family. PDRP subfamily.

It catalyses the reaction N(tele)-phospho-L-histidyl/L-threonyl-[pyruvate, phosphate dikinase] + ADP = N(tele)-phospho-L-histidyl/O-phospho-L-threonyl-[pyruvate, phosphate dikinase] + AMP + H(+). The enzyme catalyses N(tele)-phospho-L-histidyl/O-phospho-L-threonyl-[pyruvate, phosphate dikinase] + phosphate + H(+) = N(tele)-phospho-L-histidyl/L-threonyl-[pyruvate, phosphate dikinase] + diphosphate. Its function is as follows. Bifunctional serine/threonine kinase and phosphorylase involved in the regulation of the pyruvate, phosphate dikinase (PPDK) by catalyzing its phosphorylation/dephosphorylation. The protein is Putative pyruvate, phosphate dikinase regulatory protein of Halothermothrix orenii (strain H 168 / OCM 544 / DSM 9562).